Reading from the N-terminus, the 305-residue chain is MQKPDLSVEIAGITLRNPVMTASGTFGYGEEFSEYVNLEAIGAIITKGLSLKPKAGNPTPRIVETTGGMLNAIGLQNVGIDAFVEKKVPFLRTVATPVIVNFFGNTLEEYAELAERLDLIPEVAAVEINISCPNVKHGGIVFGTDPKAAYSVVKAVREATIKPVIVKLSPNVTDIVEMAWACADAEADALSLINTLTGMAIDLDKRRPILANVTGGLSGPAVKPIALRMVWQVARAVKIPVIGIGGIMTGIDALEFMLAGATAVQVGTANFLDPGAAGRIAAEMERYLADNGIADVKEMIGALEV.

FMN is bound by residues serine 23 and 47 to 48 (KG). Substrate is bound by residues lysine 47 and 71–75 (NAIGL). Residues asparagine 101 and asparagine 129 each coordinate FMN. Asparagine 129 provides a ligand contact to substrate. Cysteine 132 acts as the Nucleophile in catalysis. Lysine 167 and isoleucine 193 together coordinate FMN. 194-195 (NT) is a binding site for substrate. Residues glycine 219, 245–246 (GG), and 267–268 (GT) contribute to the FMN site.

It belongs to the dihydroorotate dehydrogenase family. Type 1 subfamily. As to quaternary structure, heterotetramer of 2 PyrK and 2 PyrD type B subunits. The cofactor is FMN.

The protein localises to the cytoplasm. It carries out the reaction (S)-dihydroorotate + NAD(+) = orotate + NADH + H(+). The protein operates within pyrimidine metabolism; UMP biosynthesis via de novo pathway; orotate from (S)-dihydroorotate (NAD(+) route): step 1/1. In terms of biological role, catalyzes the conversion of dihydroorotate to orotate with NAD(+) as electron acceptor. The protein is Dihydroorotate dehydrogenase B (NAD(+)), catalytic subunit (pyrD) of Geobacter sulfurreducens (strain ATCC 51573 / DSM 12127 / PCA).